The chain runs to 94 residues: UPF0381 protein YfcZ (94 aa).

Belongs to the UPF0381 family.

The protein is UPF0381 protein YfcZ (yfcZ) of Escherichia coli O6:H1 (strain CFT073 / ATCC 700928 / UPEC).